Consider the following 488-residue polypeptide: Retinoic acid receptor RXR-alpha (488 aa).

Residues Met-1–Ile-160 form a modulating region. Lys-134 is covalently cross-linked (Glycyl lysine isopeptide (Lys-Gly) (interchain with G-Cter in SUMO)). A DNA-binding region (nuclear receptor) is located at residues Lys-158–Glu-233. Positions 161, 164, 178, and 181 each coordinate Zn(2+). The NR C4-type zinc-finger motif lies at Cys-161–Cys-181. The interval Lys-186–Lys-191 is nuclear localization signal. Residues Cys-197, Cys-203, Cys-213, and Cys-216 each coordinate Zn(2+). The segment at Cys-197 to Cys-216 adopts an NR C4-type zinc-finger fold. Residues Lys-227–Asn-250 form a hinge region. Residues Gln-232–Asn-244 are compositionally biased toward basic and acidic residues. Residues Gln-232–Met-256 form a disordered region. The NR LBD domain occupies Asn-253 to Pro-484. The 9-cis-retinoate site is built by Arg-342 and Ala-353. Residues Arg-342 and Ala-353 each contribute to the all-trans-retinoate site. Residues Arg-374–Gly-394 are required for nuclear export. The segment at Ile-473–Pro-484 is AF-2.

This sequence belongs to the nuclear hormone receptor family. NR2 subfamily. Homodimer. Heterodimer; with a rar molecule. Binds DNA preferentially as a rar/rxr heterodimer. Interacts with coactivator ncoa3 and with senp6. Sumoylated on Lys-134; which negatively regulates transcriptional activity. Desumoylated specifically by SENP6.

Its subcellular location is the nucleus. Functionally, receptor for retinoic acid that acts as a transcription factor. Forms homo- or heterodimers with retinoic acid receptors (rars) and binds to target response elements in response to their ligands, all-trans or 9-cis retinoic acid, to regulate gene expression in various biological processes. The rar/rxr heterodimers bind to the retinoic acid response elements (RARE) composed of tandem 5'-AGGTCA-3' sites known as DR1-DR5 to regulate transcription. The high affinity ligand for rxrs is 9-cis retinoic acid. In the absence of ligand, the rar/rxr heterodimers associate with a multiprotein complex containing transcription corepressors that induce histone deacetylation, chromatin condensation and transcriptional suppression. On ligand binding, the corepressors dissociate from the receptors and coactivators are recruited leading to transcriptional activation. The chain is Retinoic acid receptor RXR-alpha (rxra) from Xenopus laevis (African clawed frog).